Consider the following 482-residue polypeptide: Adenylyltransferase and sulfurtransferase uba4 (482 aa).

The interval 33 to 57 is disordered; sequence EGAALRAQSQKTASANATTGQRTKS. Residues 39-54 are compositionally biased toward polar residues; it reads AQSQKTASANATTGQR. ATP contacts are provided by residues glycine 98, aspartate 119, 126-130, lysine 143, and 187-188; these read SNLHR and DN. Cysteine 236 and cysteine 239 together coordinate Zn(2+). Cysteine 253 (glycyl thioester intermediate; for adenylyltransferase activity) is an active-site residue. Residues cysteine 315 and cysteine 318 each coordinate Zn(2+). The Rhodanese domain maps to 366–480; that stretch reads AGAQRHIIDV…WREQVDPDWP (115 aa). Cysteine 435 (cysteine persulfide intermediate; for sulfurtransferase activity) is an active-site residue.

In the N-terminal section; belongs to the HesA/MoeB/ThiF family. UBA4 subfamily. Zn(2+) is required as a cofactor.

It localises to the cytoplasm. The protein resides in the cytosol. The catalysed reaction is [molybdopterin-synthase sulfur-carrier protein]-C-terminal Gly-Gly + ATP + H(+) = [molybdopterin-synthase sulfur-carrier protein]-C-terminal Gly-Gly-AMP + diphosphate. The enzyme catalyses [molybdopterin-synthase sulfur-carrier protein]-C-terminal Gly-Gly-AMP + S-sulfanyl-L-cysteinyl-[cysteine desulfurase] + AH2 = [molybdopterin-synthase sulfur-carrier protein]-C-terminal-Gly-aminoethanethioate + L-cysteinyl-[cysteine desulfurase] + A + AMP + 2 H(+). Its pathway is tRNA modification; 5-methoxycarbonylmethyl-2-thiouridine-tRNA biosynthesis. It functions in the pathway cofactor biosynthesis; molybdopterin biosynthesis. Functionally, plays a central role in 2-thiolation of mcm(5)S(2)U at tRNA wobble positions of cytosolic tRNA(Lys), tRNA(Glu) and tRNA(Gln). Also essential during biosynthesis of the molybdenum cofactor. Acts by mediating the C-terminal thiocarboxylation of sulfur carriers urm1 and mocs2a. Its N-terminus first activates urm1 and mocs2a as acyl-adenylates (-COAMP), then the persulfide sulfur on the catalytic cysteine is transferred to urm1 and mocs2a to form thiocarboxylation (-COSH) of their C-terminus. The reaction probably involves hydrogen sulfide that is generated from the persulfide intermediate and that acts as a nucleophile towards urm1 and mocs2a. Subsequently, a transient disulfide bond is formed. Does not use thiosulfate as sulfur donor; nfs1 probably acting as a sulfur donor for thiocarboxylation reactions. The chain is Adenylyltransferase and sulfurtransferase uba4 from Emericella nidulans (strain FGSC A4 / ATCC 38163 / CBS 112.46 / NRRL 194 / M139) (Aspergillus nidulans).